Here is a 137-residue protein sequence, read N- to C-terminus: Large ribosomal subunit protein uL16 (137 aa).

Belongs to the universal ribosomal protein uL16 family. Part of the 50S ribosomal subunit.

Functionally, binds 23S rRNA and is also seen to make contacts with the A and possibly P site tRNAs. This is Large ribosomal subunit protein uL16 from Roseobacter denitrificans (strain ATCC 33942 / OCh 114) (Erythrobacter sp. (strain OCh 114)).